The sequence spans 442 residues: Cysteine proteinase 4 (442 aa).

The signal sequence occupies residues methionine 1–alanine 17. The propeptide at lysine 18–proline 111 is activation peptide. Intrachain disulfides connect cysteine 132-cysteine 178 and cysteine 169-cysteine 212. Cysteine 135 is a catalytic residue. 2 N-linked (GlcNAc...) asparagine glycosylation sites follow: asparagine 228 and asparagine 254. A disulfide bridge connects residues cysteine 270 and cysteine 428. Histidine 277 is a catalytic residue. The interval serine 286–alanine 396 is disordered. The segment covering glycine 287–glycine 376 has biased composition (low complexity). Residues serine 377 to serine 391 are compositionally biased toward gly residues. Residue asparagine 406 is part of the active site.

This sequence belongs to the peptidase C1 family. In terms of processing, glycosylated; contains GlcNAc-alpha-1-P-Ser residues and fucose.

The protein resides in the lysosome. The chain is Cysteine proteinase 4 (cprD) from Dictyostelium discoideum (Social amoeba).